The following is a 191-amino-acid chain: Ribonuclease HII (191 aa).

The RNase H type-2 domain occupies 7–191 (ILMAGVDEVG…YSPVADLISK (185 aa)). A divalent metal cation is bound by residues D13, E14, and D103.

It belongs to the RNase HII family. The cofactor is Mn(2+). Mg(2+) serves as cofactor.

It is found in the cytoplasm. The enzyme catalyses Endonucleolytic cleavage to 5'-phosphomonoester.. Endonuclease that specifically degrades the RNA of RNA-DNA hybrids. The polypeptide is Ribonuclease HII (Legionella pneumophila (strain Corby)).